Here is a 349-residue protein sequence, read N- to C-terminus: Protein-glutamate methylesterase/protein-glutamine glutaminase (349 aa).

The 118-residue stretch at 5-122 (RVLCVDDSAL…REGMLAYSEL (118 aa)) folds into the Response regulatory domain. Position 56 is a 4-aspartylphosphate (D56). The CheB-type methylesterase domain maps to 152-344 (LLSSEKLIAI…QRMLAQISSG (193 aa)). Active-site residues include S164, H190, and D286.

The protein belongs to the CheB family. Post-translationally, phosphorylated by CheA. Phosphorylation of the N-terminal regulatory domain activates the methylesterase activity.

It is found in the cytoplasm. It catalyses the reaction [protein]-L-glutamate 5-O-methyl ester + H2O = L-glutamyl-[protein] + methanol + H(+). The catalysed reaction is L-glutaminyl-[protein] + H2O = L-glutamyl-[protein] + NH4(+). Involved in chemotaxis. Part of a chemotaxis signal transduction system that modulates chemotaxis in response to various stimuli. Catalyzes the demethylation of specific methylglutamate residues introduced into the chemoreceptors (methyl-accepting chemotaxis proteins or MCP) by CheR. Also mediates the irreversible deamidation of specific glutamine residues to glutamic acid. The protein is Protein-glutamate methylesterase/protein-glutamine glutaminase of Yersinia pestis bv. Antiqua (strain Antiqua).